The sequence spans 92 residues: Acylphosphatase (92 aa).

An Acylphosphatase-like domain is found at 5-92 (GVTIYVYGRV…EDIADFIVRH (88 aa)). Catalysis depends on residues R20 and N38.

This sequence belongs to the acylphosphatase family.

It catalyses the reaction an acyl phosphate + H2O = a carboxylate + phosphate + H(+). The sequence is that of Acylphosphatase (acyP) from Photorhabdus laumondii subsp. laumondii (strain DSM 15139 / CIP 105565 / TT01) (Photorhabdus luminescens subsp. laumondii).